The following is a 958-amino-acid chain: Translation initiation factor IF-2 (958 aa).

Disordered stretches follow at residues 67 to 95 (APAA…APAP) and 111 to 355 (PAPA…VPRG). The segment covering 75–95 (APAPGPAAPKAPAPAPAAPAP) has biased composition (pro residues). Over residues 140 to 161 (PAPARQGGQAPRPGGPRPGNNP) the composition is skewed to low complexity. The segment covering 195–206 (RGERRNDGERPG) has biased composition (basic and acidic residues). The segment covering 209 to 221 (RPAAGAGGPRPAA) has biased composition (low complexity). Pro residues predominate over residues 228–241 (PGAPRPGAPRPGAP). Gly residues predominate over residues 268 to 325 (GGAGRPGGAGRPGGGPGRPGGAPGAGTGGGAPAGGGFGKGGRGRGGTQGAFGKGGAGR). The segment covering 326-335 (GKQRKSKRAK) has biased composition (basic residues). The tr-type G domain maps to 450-621 (ARAPVVTVMG…AVLLTADAAL (172 aa)). The tract at residues 459–466 (GHVDHGKT) is G1. 459-466 (GHVDHGKT) lines the GTP pocket. The interval 484–488 (GITQH) is G2. A G3 region spans residues 509 to 512 (DTPG). Residues 509-513 (DTPGH) and 563-566 (NKID) contribute to the GTP site. Residues 563 to 566 (NKID) are G4. Residues 599–601 (SAR) form a G5 region.

Belongs to the TRAFAC class translation factor GTPase superfamily. Classic translation factor GTPase family. IF-2 subfamily.

The protein localises to the cytoplasm. Functionally, one of the essential components for the initiation of protein synthesis. Protects formylmethionyl-tRNA from spontaneous hydrolysis and promotes its binding to the 30S ribosomal subunits. Also involved in the hydrolysis of GTP during the formation of the 70S ribosomal complex. In Paenarthrobacter aurescens (strain TC1), this protein is Translation initiation factor IF-2.